Consider the following 482-residue polypeptide: Vanillin dehydrogenase (482 aa).

Residue 228–233 (GSTHVG) participates in NAD(+) binding. Active-site residues include Glu250 and Cys284.

Belongs to the aldehyde dehydrogenase family.

The enzyme catalyses vanillin + NAD(+) + H2O = vanillate + NADH + 2 H(+). Its function is as follows. Catalyzes the NAD-dependent oxidation of vanillin to vanillic acid. The sequence is that of Vanillin dehydrogenase (vdh) from Pseudomonas fluorescens.